Here is a 322-residue protein sequence, read N- to C-terminus: Beta-ketoacyl-[acyl-carrier-protein] synthase III (322 aa).

Active-site residues include Cys-113 and His-249. An ACP-binding region spans residues 250 to 254 (QANIR). Asn-279 is a catalytic residue.

The protein belongs to the thiolase-like superfamily. FabH family. Homodimer.

It localises to the cytoplasm. The catalysed reaction is malonyl-[ACP] + acetyl-CoA + H(+) = 3-oxobutanoyl-[ACP] + CO2 + CoA. The protein operates within lipid metabolism; fatty acid biosynthesis. Its function is as follows. Catalyzes the condensation reaction of fatty acid synthesis by the addition to an acyl acceptor of two carbons from malonyl-ACP. Catalyzes the first condensation reaction which initiates fatty acid synthesis and may therefore play a role in governing the total rate of fatty acid production. Possesses both acetoacetyl-ACP synthase and acetyl transacylase activities. Its substrate specificity determines the biosynthesis of branched-chain and/or straight-chain of fatty acids. This Thioalkalivibrio sulfidiphilus (strain HL-EbGR7) protein is Beta-ketoacyl-[acyl-carrier-protein] synthase III.